A 378-amino-acid polypeptide reads, in one-letter code: Succinate--CoA ligase [ADP-forming] subunit beta (378 aa).

The ATP-grasp domain maps to 9–237 (RDIVARYGIP…IAGEPESEIK (229 aa)). ATP-binding positions include Lys-45, 52 to 54 (GRG), Ile-94, and Glu-99. Positions 192 and 206 each coordinate Mg(2+). Substrate is bound by residues Asn-257 and 314 to 316 (GIT).

This sequence belongs to the succinate/malate CoA ligase beta subunit family. As to quaternary structure, heterotetramer of two alpha and two beta subunits. It depends on Mg(2+) as a cofactor.

The enzyme catalyses succinate + ATP + CoA = succinyl-CoA + ADP + phosphate. The catalysed reaction is GTP + succinate + CoA = succinyl-CoA + GDP + phosphate. It functions in the pathway carbohydrate metabolism; tricarboxylic acid cycle; succinate from succinyl-CoA (ligase route): step 1/1. Functionally, succinyl-CoA synthetase functions in the citric acid cycle (TCA), coupling the hydrolysis of succinyl-CoA to the synthesis of either ATP or GTP and thus represents the only step of substrate-level phosphorylation in the TCA. The beta subunit provides nucleotide specificity of the enzyme and binds the substrate succinate, while the binding sites for coenzyme A and phosphate are found in the alpha subunit. The protein is Succinate--CoA ligase [ADP-forming] subunit beta of Herpetosiphon aurantiacus (strain ATCC 23779 / DSM 785 / 114-95).